Reading from the N-terminus, the 359-residue chain is GTP 3',8-cyclase (359 aa).

The Radical SAM core domain occupies 33 to 260; sequence RFGRRHDSLR…PTGRENPSAP (228 aa). R42 contacts GTP. Residues C49 and C53 each contribute to the [4Fe-4S] cluster site. Y55 serves as a coordination point for S-adenosyl-L-methionine. Residue C56 coordinates [4Fe-4S] cluster. Residue R93 coordinates GTP. S-adenosyl-L-methionine is bound at residue G97. T124 is a binding site for GTP. S148 is an S-adenosyl-L-methionine binding site. Position 185 (K185) interacts with GTP. M219 lines the S-adenosyl-L-methionine pocket. C286 and C289 together coordinate [4Fe-4S] cluster. A GTP-binding site is contributed by 291-293; it reads RLR. A [4Fe-4S] cluster-binding site is contributed by C303.

The protein belongs to the radical SAM superfamily. MoaA family. As to quaternary structure, monomer and homodimer. [4Fe-4S] cluster is required as a cofactor.

It catalyses the reaction GTP + AH2 + S-adenosyl-L-methionine = (8S)-3',8-cyclo-7,8-dihydroguanosine 5'-triphosphate + 5'-deoxyadenosine + L-methionine + A + H(+). It functions in the pathway cofactor biosynthesis; molybdopterin biosynthesis. In terms of biological role, catalyzes the cyclization of GTP to (8S)-3',8-cyclo-7,8-dihydroguanosine 5'-triphosphate. This is GTP 3',8-cyclase from Rhodopirellula baltica (strain DSM 10527 / NCIMB 13988 / SH1).